The chain runs to 341 residues: Glyceraldehyde-3-phosphate dehydrogenase 4 (341 aa).

NAD(+)-binding positions include 13 to 14, D35, and K85; that span reads RI. Residues 157–159, T188, 217–218, and R240 each bind D-glyceraldehyde 3-phosphate; these read SCT and TG. C158 acts as the Nucleophile in catalysis. NAD(+) is bound at residue N322.

Belongs to the glyceraldehyde-3-phosphate dehydrogenase family. In terms of assembly, homotetramer.

The protein localises to the cytoplasm. The enzyme catalyses D-glyceraldehyde 3-phosphate + phosphate + NAD(+) = (2R)-3-phospho-glyceroyl phosphate + NADH + H(+). Its pathway is carbohydrate degradation; glycolysis; pyruvate from D-glyceraldehyde 3-phosphate: step 1/5. In Caenorhabditis elegans, this protein is Glyceraldehyde-3-phosphate dehydrogenase 4 (gpd-4).